A 501-amino-acid chain; its full sequence is Flagellin (501 aa).

It belongs to the bacterial flagellin family.

The protein resides in the secreted. It is found in the bacterial flagellum. In terms of biological role, flagellin is the subunit protein which polymerizes to form the filaments of bacterial flagella. This is Flagellin (flaA) from Aquifex pyrophilus.